The primary structure comprises 335 residues: Ornithine carbamoyltransferase, catabolic (335 aa).

Residues 59 to 62 (STRT), Gln86, Arg110, and 137 to 140 (HPTQ) contribute to the carbamoyl phosphate site. Residues Asn169, Asp233, and 237 to 238 (SM) contribute to the L-ornithine site. Residues 274–275 (CL) and Arg319 each bind carbamoyl phosphate.

The protein belongs to the aspartate/ornithine carbamoyltransferase superfamily. OTCase family.

Its subcellular location is the cytoplasm. It catalyses the reaction carbamoyl phosphate + L-ornithine = L-citrulline + phosphate + H(+). It functions in the pathway amino-acid degradation; L-arginine degradation via ADI pathway; carbamoyl phosphate from L-arginine: step 2/2. Functionally, reversibly catalyzes the transfer of the carbamoyl group from carbamoyl phosphate (CP) to the N(epsilon) atom of ornithine (ORN) to produce L-citrulline. The chain is Ornithine carbamoyltransferase, catabolic (arcB) from Bacillus licheniformis (strain ATCC 14580 / DSM 13 / JCM 2505 / CCUG 7422 / NBRC 12200 / NCIMB 9375 / NCTC 10341 / NRRL NRS-1264 / Gibson 46).